A 467-amino-acid chain; its full sequence is Phytase A (467 aa).

Residues 1 to 23 (MGVSAVLLPLYLLAGVTSGLAVP) form the signal peptide. N-linked (GlcNAc...) asparagine glycosylation occurs at asparagine 27. An intrachain disulfide couples cysteine 31 to cysteine 40. Residues glutamine 50 and tyrosine 51 each contribute to the 1D-myo-inositol hexakisphosphate site. Asparagine 59 carries N-linked (GlcNAc...) asparagine glycosylation. 4 disulfides stabilise this stretch: cysteine 71–cysteine 414, cysteine 215–cysteine 465, cysteine 264–cysteine 282, and cysteine 436–cysteine 444. Residues arginine 81, histidine 82, arginine 85, and threonine 88 each coordinate 1D-myo-inositol hexakisphosphate. Histidine 82 serves as the catalytic Nucleophile. 2 N-linked (GlcNAc...) asparagine glycosylation sites follow: asparagine 105 and asparagine 120. Residue arginine 165 coordinates 1D-myo-inositol hexakisphosphate. 2 N-linked (GlcNAc...) asparagine glycosylation sites follow: asparagine 207 and asparagine 230. Lysine 301 is a 1D-myo-inositol hexakisphosphate binding site. N-linked (GlcNAc...) asparagine glycans are attached at residues asparagine 339 and asparagine 352. The 1D-myo-inositol hexakisphosphate site is built by histidine 361 and aspartate 362. Residues asparagine 376 and asparagine 388 are each glycosylated (N-linked (GlcNAc...) asparagine).

The protein belongs to the histidine acid phosphatase family. Monomer.

The protein resides in the secreted. The catalysed reaction is 1D-myo-inositol hexakisphosphate + H2O = 1D-myo-inositol 1,2,4,5,6-pentakisphosphate + phosphate. It carries out the reaction 1D-myo-inositol 1,2,4,5,6-pentakisphosphate + H2O = 1D-myo-inositol 1,2,5,6-tetrakisphosphate + phosphate. It catalyses the reaction 1D-myo-inositol 1,2,5,6-tetrakisphosphate + H2O = 1D-myo-inositol 1,2,6-trisphosphate + phosphate. The enzyme catalyses 1D-myo-inositol 1,2,6-trisphosphate + H2O = 1D-myo-inositol 1,2-bisphosphate + phosphate. The catalysed reaction is 1D-myo-inositol 1,2-bisphosphate + H2O = 1D-myo-inositol 2-phosphate + phosphate. Functionally, catalyzes the phosphate monoester hydrolysis of phytic acid (myo-inositol hexakisphosphate), which results in the stepwise formation of myo-inositol pentakis-, tetrakis-, tris-, bis-, and monophosphates, as well as the liberation of inorganic phosphate. Myo-inositol 2-monophosphate is the end product. The chain is Phytase A (phyA) from Aspergillus awamori (Black koji mold).